The primary structure comprises 335 residues: Ketol-acid reductoisomerase (NADP(+)) 2 (335 aa).

The KARI N-terminal Rossmann domain occupies Met-1–Thr-180. NADP(+) is bound by residues Tyr-24–Gln-27, Arg-47, Ser-51, and Asp-81–Gln-84. Residue His-106 is part of the active site. Gly-132 is an NADP(+) binding site. The region spanning Thr-181–Ile-326 is the KARI C-terminal knotted domain. The Mg(2+) site is built by Asp-189, Glu-193, Glu-225, and Glu-229. Substrate is bound at residue Ser-250.

It belongs to the ketol-acid reductoisomerase family. Mg(2+) serves as cofactor.

The catalysed reaction is (2R)-2,3-dihydroxy-3-methylbutanoate + NADP(+) = (2S)-2-acetolactate + NADPH + H(+). It carries out the reaction (2R,3R)-2,3-dihydroxy-3-methylpentanoate + NADP(+) = (S)-2-ethyl-2-hydroxy-3-oxobutanoate + NADPH + H(+). The protein operates within amino-acid biosynthesis; L-isoleucine biosynthesis; L-isoleucine from 2-oxobutanoate: step 2/4. It functions in the pathway amino-acid biosynthesis; L-valine biosynthesis; L-valine from pyruvate: step 2/4. Its function is as follows. Involved in the biosynthesis of branched-chain amino acids (BCAA). Catalyzes an alkyl-migration followed by a ketol-acid reduction of (S)-2-acetolactate (S2AL) to yield (R)-2,3-dihydroxy-isovalerate. In the isomerase reaction, S2AL is rearranged via a Mg-dependent methyl migration to produce 3-hydroxy-3-methyl-2-ketobutyrate (HMKB). In the reductase reaction, this 2-ketoacid undergoes a metal-dependent reduction by NADPH to yield (R)-2,3-dihydroxy-isovalerate. The polypeptide is Ketol-acid reductoisomerase (NADP(+)) 2 (Bacillus anthracis).